A 377-amino-acid polypeptide reads, in one-letter code: Lipoyl synthase, mitochondrial (377 aa).

Residues Cys-98, Cys-103, Cys-109, Cys-128, Cys-132, Cys-135, and Ser-343 each contribute to the [4Fe-4S] cluster site. The region spanning 113–332 (KKSEATATIM…RDTALDMGFL (220 aa)) is the Radical SAM core domain.

It belongs to the radical SAM superfamily. Lipoyl synthase family. [4Fe-4S] cluster is required as a cofactor.

The protein resides in the mitochondrion. The enzyme catalyses [[Fe-S] cluster scaffold protein carrying a second [4Fe-4S](2+) cluster] + N(6)-octanoyl-L-lysyl-[protein] + 2 oxidized [2Fe-2S]-[ferredoxin] + 2 S-adenosyl-L-methionine + 4 H(+) = [[Fe-S] cluster scaffold protein] + N(6)-[(R)-dihydrolipoyl]-L-lysyl-[protein] + 4 Fe(3+) + 2 hydrogen sulfide + 2 5'-deoxyadenosine + 2 L-methionine + 2 reduced [2Fe-2S]-[ferredoxin]. Its pathway is protein modification; protein lipoylation via endogenous pathway; protein N(6)-(lipoyl)lysine from octanoyl-[acyl-carrier-protein]: step 2/2. In terms of biological role, catalyzes the radical-mediated insertion of two sulfur atoms into the C-6 and C-8 positions of the octanoyl moiety bound to the lipoyl domains of lipoate-dependent enzymes, thereby converting the octanoylated domains into lipoylated derivatives. This Candida tropicalis (strain ATCC MYA-3404 / T1) (Yeast) protein is Lipoyl synthase, mitochondrial.